The primary structure comprises 578 residues: Ribonuclease SLFN12 (578 aa).

Position 368 is a phosphoserine (S368). Residues A551 to I560 form a mediates interaction with PDE3A region. S573 bears the Phosphoserine mark.

It belongs to the Schlafen family. Subgroup II subfamily. As to quaternary structure, homodimer. Interacts with PDE3A; direct low affinity interaction which is stimulated by binding of 17beta-estradiol/E2 to PDE3A and that positively regulates the ribonuclease activity of SLFN12. Interacts with SERPINB12; as part of a pathway regulating cell differentiation. Phosphorylation at Ser-368 and Ser-573 negatively regulates the ribonuclease activity. Dephosphorylation is induced by the interaction with PDE3A and stimulates the rRNA ribonuclease activity.

The protein resides in the nucleus. It localises to the cytoplasm. It is found in the cytosol. Functionally, ribonuclease which is part of an E2/17beta-estradiol-induced pro-apoptotic signaling pathway. E2 stabilizes the PDE3A/SLFN12 complex in the cytosol, promoting the dephosphorylation of SLFN12 and activating its pro-apoptotic ribosomal RNA/rRNA ribonuclease activity. This apoptotic pathway might be relevant in tissues with high concentration of E2 and be for instance involved in placenta remodeling. May play a role in cell differentiation. The sequence is that of Ribonuclease SLFN12 from Homo sapiens (Human).